The following is a 138-amino-acid chain: Basic phospholipase A2 DAV-N6 (138 aa).

The signal sequence occupies residues M1–G16. 7 cysteine pairs are disulfide-bonded: C42–C131, C44–C60, C59–C111, C65–C138, C66–C104, C73–C97, and C91–C102. Y43, G45, and G47 together coordinate Ca(2+). The active site involves H63. D64 provides a ligand contact to Ca(2+). Residue D105 is part of the active site.

Requires Ca(2+) as cofactor. As to expression, expressed by the venom gland.

It is found in the secreted. The catalysed reaction is a 1,2-diacyl-sn-glycero-3-phosphocholine + H2O = a 1-acyl-sn-glycero-3-phosphocholine + a fatty acid + H(+). Snake venom phospholipase A2 (PLA2) that inhibits neuromuscular transmission by blocking acetylcholine release from the nerve termini. PLA2 catalyzes the calcium-dependent hydrolysis of the 2-acyl groups in 3-sn-phosphoglycerides. This chain is Basic phospholipase A2 DAV-N6, found in Deinagkistrodon acutus (Hundred-pace snake).